We begin with the raw amino-acid sequence, 394 residues long: Na(+)/H(+) antiporter NhaA (394 aa).

The next 11 helical transmembrane spans lie at 14–34 (AGGL…NSAL), 59–79 (LLLW…GLEV), 95–115 (VFPA…YLLF), 125–145 (GWAI…ALLG), 154–174 (VFLL…IALF), 179–199 (VSLQ…YMNW), 213–233 (LVLW…GVIV), 254–274 (GLHP…NAGV), 292–312 (IATG…WLAV), 328–348 (IFAV…IASL), and 363–383 (LGIL…LRLV).

The protein belongs to the NhaA Na(+)/H(+) (TC 2.A.33) antiporter family.

The protein resides in the cell inner membrane. The catalysed reaction is Na(+)(in) + 2 H(+)(out) = Na(+)(out) + 2 H(+)(in). Na(+)/H(+) antiporter that extrudes sodium in exchange for external protons. In Yersinia pseudotuberculosis serotype O:1b (strain IP 31758), this protein is Na(+)/H(+) antiporter NhaA.